Here is a 135-residue protein sequence, read N- to C-terminus: Putative pre-16S rRNA nuclease (135 aa).

This sequence belongs to the YqgF nuclease family.

It is found in the cytoplasm. Functionally, could be a nuclease involved in processing of the 5'-end of pre-16S rRNA. This Thermus thermophilus (strain ATCC 27634 / DSM 579 / HB8) protein is Putative pre-16S rRNA nuclease.